Reading from the N-terminus, the 26-residue chain is Turripeptide OL57 (26 aa).

Post-translationally, contains 2 disulfide bonds. As to expression, expressed by the venom duct.

It localises to the secreted. Its function is as follows. Acts as a neurotoxin by inhibiting an ion channel. This Iotyrris olangoensis (Sea snail) protein is Turripeptide OL57.